The sequence spans 73 residues: DNA-directed RNA polymerase subunit omega (73 aa).

It belongs to the RNA polymerase subunit omega family. The RNAP catalytic core consists of 2 alpha, 1 beta, 1 beta' and 1 omega subunit. When a sigma factor is associated with the core the holoenzyme is formed, which can initiate transcription.

The catalysed reaction is RNA(n) + a ribonucleoside 5'-triphosphate = RNA(n+1) + diphosphate. Functionally, promotes RNA polymerase assembly. Latches the N- and C-terminal regions of the beta' subunit thereby facilitating its interaction with the beta and alpha subunits. The sequence is that of DNA-directed RNA polymerase subunit omega from Lactobacillus delbrueckii subsp. bulgaricus (strain ATCC BAA-365 / Lb-18).